An 801-amino-acid polypeptide reads, in one-letter code: MNSTTTKNVCGDKWYLNLDRPEEALKILVFIAIFVVRTLLHYLMKPLGQPYLTTDFAIGLILGNIPRFRGAFSGPYSITLNNIIEFGMICHMFVMGLEMNPSVLLRPPTKDAFIAYTSMITTFVLAFVTTPFLHYTKTSPYIFSLALSLMASSTGSPILTRVIANLKIRKSDLGKLASAAGVHTDMISTLLYCFGFIFFPTEKPLARPLHRFFRALLMFCLFLAQVTFTSIVSPIFLNWVNNENPEGKPLKGSHLVMSLAFVVLICSFPTWPPESMYNPILSAFTAGLFLPNKGRMSKWIINKINYLLSTVFYPIFFFWVGFIIHMRNFDITDKMAWVRFFSLLGTVIAGKVTGTVLCGLLLGYHVPETASLGLLLTTKGHFHVYLAALAIRTNRVKSTTGALIIFIIVFTVVYSPFVVMDIIKRARKRVPVHIMALQWLDPTTELRILIGLHGPHNIGSTLNVMEICHGGREPGSIFYATDMVELTDEIAATLKKGGGAGQSNDSVTVTDRSVTEMRESITAAVNGYGELRNGQGVTVRRMLALSTFVTMAHDVCGLADELMVSIIILPFHKRLNPDGTLDAGHAGFRHVNRKILKNAPCSVGILVDRSFGQTEEAWRPGASMGIAIIFIGGRDDREALAFAAQVARHPAVKLKVIRFLEDKSSQNAQKRSSILNRASVVDQEEEMKLDDECFAEFYERYIAGGGRVSYMEKHLTNSSETFTALKSLDGEYGLVIVGRGGGRASSGLTTGLNDWQQCPELGPIGDVLSGSDFSHNTSMLIIQQQRTRGQLEGLHDDFTIL.

12 consecutive transmembrane segments (helical) span residues 24-44 (ALKI…HYLM), 77-97 (SITL…VMGL), 113-133 (FIAY…TPFL), 140-160 (PYIF…PILT), 179-199 (AAGV…FIFF), 216-236 (LLMF…SPIF), 252-272 (GSHL…PTWP), 275-292 (SMYN…FLPN), 304-324 (INYL…GFII), 343-363 (LLGT…LLLG), 371-391 (SLGL…ALAI), and 403-423 (LIIF…MDII).

Belongs to the monovalent cation:proton antiporter 2 (CPA2) transporter (TC 2.A.37) family. CHX (TC 2.A.37.4) subfamily. In terms of tissue distribution, specifically expressed in pollen.

It localises to the membrane. May operate as a cation/H(+) antiporter. The sequence is that of Cation/H(+) antiporter 28 (CHX28) from Arabidopsis thaliana (Mouse-ear cress).